We begin with the raw amino-acid sequence, 122 residues long: Small ribosomal subunit protein uS13 (122 aa).

The segment at 99-122 (RGQRTHTNARTRKGPAKAIAGKKK) is disordered.

Belongs to the universal ribosomal protein uS13 family. As to quaternary structure, part of the 30S ribosomal subunit. Forms a loose heterodimer with protein S19. Forms two bridges to the 50S subunit in the 70S ribosome.

Its function is as follows. Located at the top of the head of the 30S subunit, it contacts several helices of the 16S rRNA. In the 70S ribosome it contacts the 23S rRNA (bridge B1a) and protein L5 of the 50S subunit (bridge B1b), connecting the 2 subunits; these bridges are implicated in subunit movement. Contacts the tRNAs in the A and P-sites. The chain is Small ribosomal subunit protein uS13 from Agrobacterium fabrum (strain C58 / ATCC 33970) (Agrobacterium tumefaciens (strain C58)).